Consider the following 564-residue polypeptide: Efflux pump hmp6 (564 aa).

The span at 1–25 shows a compositional bias: basic and acidic residues; that stretch reads MEKHAEPEKSLGDKEFQEKELHEKP. The disordered stretch occupies residues 1-46; the sequence is MEKHAEPEKSLGDKEFQEKELHEKPAPAASEDISGDSSVNKEDGPD. Helical transmembrane passes span 58 to 78, 96 to 118, 125 to 145, 156 to 176, 186 to 206, 214 to 234, 259 to 279, and 289 to 309; these read LAVVMFALCISNFLVALDTTI, VGWYTSSYLLTNCAFQLFYGKLY, IVFTVAMIIFEIGSLLCGVAP, IAGLGSAGAFSGALIIVIHSV, GMIVGMYGLASVAAPLIGGAF, WCFYINLPCGGVAIAGLLFFF, FGTFFFLCSMICLLLALQMGG, and IIVLLVLFGLLLVAFIVVQFF. N-linked (GlcNAc...) asparagine glycosylation is found at Asn-312 and Asn-322. A run of 4 helical transmembrane segments spans residues 330-350, 361-383, 395-415, and 452-472; these read IYMFCVGAQFLVLVTFMPIWF, SGIRSLPILLSNTFCVVLAGALV, ASVVLTSIGAGLLTTLTVDAS, and IGTAVMVFVQLLGGTILVSAA.

It belongs to the major facilitator superfamily. TCR/Tet family.

The protein resides in the cell membrane. Functionally, efflux pump that might be required for efficient secretion of hypothemycin or other secondary metabolies produced by the hypothemycin gene cluster. The polypeptide is Efflux pump hmp6 (Hypomyces subiculosus (Nectria subiculosa)).